Consider the following 211-residue polypeptide: Uridine kinase (211 aa).

13–20 contacts ATP; the sequence is GGTASGKT.

The protein belongs to the uridine kinase family.

It is found in the cytoplasm. The enzyme catalyses uridine + ATP = UMP + ADP + H(+). The catalysed reaction is cytidine + ATP = CMP + ADP + H(+). The protein operates within pyrimidine metabolism; CTP biosynthesis via salvage pathway; CTP from cytidine: step 1/3. It participates in pyrimidine metabolism; UMP biosynthesis via salvage pathway; UMP from uridine: step 1/1. The sequence is that of Uridine kinase from Thermus thermophilus (strain ATCC BAA-163 / DSM 7039 / HB27).